Consider the following 415-residue polypeptide: Gamma-glutamyl phosphate reductase (415 aa).

This sequence belongs to the gamma-glutamyl phosphate reductase family.

The protein resides in the cytoplasm. The enzyme catalyses L-glutamate 5-semialdehyde + phosphate + NADP(+) = L-glutamyl 5-phosphate + NADPH + H(+). It functions in the pathway amino-acid biosynthesis; L-proline biosynthesis; L-glutamate 5-semialdehyde from L-glutamate: step 2/2. In terms of biological role, catalyzes the NADPH-dependent reduction of L-glutamate 5-phosphate into L-glutamate 5-semialdehyde and phosphate. The product spontaneously undergoes cyclization to form 1-pyrroline-5-carboxylate. In Leuconostoc citreum (strain KM20), this protein is Gamma-glutamyl phosphate reductase.